Reading from the N-terminus, the 523-residue chain is DNA-(apurinic or apyrimidinic site) endonuclease 2 (523 aa).

Glu42 contacts Mg(2+). Tyr151 is a catalytic residue. Mg(2+) is bound by residues Asp191, Asn193, and Asp294. The active-site Proton donor/acceptor is the Asp191. The interval Met348–Arg392 is disordered. Polar residues predominate over residues Asn353–Val362. Residues Cys458, His461, Cys484, and Cys508 each coordinate Zn(2+). Residues Cys458–Trp517 form a GRF-type zinc finger.

It belongs to the DNA repair enzymes AP/ExoA family. It depends on Mg(2+) as a cofactor. Mn(2+) serves as cofactor.

The protein resides in the nucleus. It carries out the reaction Exonucleolytic cleavage in the 3'- to 5'-direction to yield nucleoside 5'-phosphates.. Functionally, DNA repair enzyme that cleaves apurinic/apyrimidinic (AP) sites and removes 3'-blocking groups present at single strand breaks of damaged DNA. Provides the majority of the AP-endonuclease (APE) activity. Repairs phleomycin D1-induced DNA damage. Plays a role in oxidative damage repair. The sequence is that of DNA-(apurinic or apyrimidinic site) endonuclease 2 (apn2) from Schizosaccharomyces pombe (strain 972 / ATCC 24843) (Fission yeast).